We begin with the raw amino-acid sequence, 219 residues long: EP300-interacting inhibitor of differentiation 2 (219 aa).

The tract at residues 1–71 (MSELPADQGV…PVPEAREGPM (71 aa)) is disordered. The segment covering 20–34 (GDVRQAEVGGRRREP) has biased composition (basic and acidic residues). Residue Arg-75 is modified to Omega-N-methylarginine. The tract at residues 95-115 (AEPAEEEGPEGRPRSRPGNGP) is disordered.

In terms of assembly, heterodimer with EID2B. Interacts with the C-terminus of EP300. Interacts with HDAC1 and HDAC2. Interacts with SMAD2, SMAD4 and with the MH2 domain of SMAD3.

The protein localises to the nucleus. Its function is as follows. Interacts with EP300 and acts as a repressor of MYOD-dependent transcription and muscle differentiation. Inhibits EP300 histone acetyltransferase activity. Acts as a repressor of TGFB/SMAD transcriptional responses. May act as a repressor of the TGFB/SMAD3-dependent signaling by selectively blocking formation of TGFB-induced SMAD3-SMAD4 complex. This is EP300-interacting inhibitor of differentiation 2 from Bos taurus (Bovine).